A 233-amino-acid polypeptide reads, in one-letter code: Lectin (233 aa).

2 N-linked (GlcNAc...) asparagine glycosylation sites follow: Asn-26 and Asn-108. Mn(2+) is bound by residues Glu-118 and Asp-120. Residues Asp-120, Trp-122, Asn-124, and Glu-129 each coordinate Ca(2+). Mn(2+) is bound by residues Glu-129 and His-134.

This sequence belongs to the leguminous lectin family. In terms of assembly, monomer.

The protein resides in the secreted. Has metal-independent hemagglutinating activity towards erythrocytes from rabbit and human. Hemagglutinating activity is inhibited by glycoproteins fetuin, asialo-fetuin, thyroglobulin and azocasein but not by free carbohydrates. Inhibits ADP- and epinephrin-induced but not collagen-, fibrinogen, thrombin- or arachidonic acid-induced platelet aggregation in vitro. Has anticoagulant activity in vitro. This Bauhinia forficata (Brazilian orchid-tree) protein is Lectin.